A 692-amino-acid polypeptide reads, in one-letter code: MSSFEGQMAEYPTISIDRFDRENLRARAYFLSHCHKDHMKGLRAPTLKRRLECSLKVYLYCSPVTKELLLTSPKYRFWKKRIISIEIETPTQISLVDEASGEKEEIVVTLLPAGHCPGSVMFLFQGNNGTVLYTGDFRLAQGEAARMELLHSGGRIKDIQSVYLDTTFCDPRFYQIPSREECLSGILELVRSWITRSPYHVVWLNCKAAYGYEYLFTNLSEELGVQVHVNKLDMFRNMPEILHHLTTDRNTQIHACRHPKAEEYFQWSKLPCGITSRNRIPLHIISIKPSTMWFGERSRKTNVIVRTGESSYRACFSFHSSYSEIKDFLSYLCPVNAYPNVIPVGTTMDKVVEILKPLCRSSQSMEPKYKPLGKLKRARTVHRDSEEEDDYLFDDPLPIPLRHKVPYQETLHPEVFSMTVVSEKQPEKLRQTPGCCRAESMQSSRFTNFVDCEESNSESEEEVGIPASLQGDLGSVLHLQKADGDVPQWKVFFKRNDEITDERLENFPSSTEAGGSQSPKLFSDSDGESTHISSQNSSQSTHITEQGSQGWDSQSDTVLLSSQERNSGDITSLDKVDYRPTIKENIPASLMEQNVICPKHTYSDLKSRDQDVTVVPSTGEPTTLSSETHIPEEKSLLNLSTNADSQSSSDFEVPSTPEAELPKREHLQYLYEKLATGESIAVKKRKCSLSDI.

Residue Thr-380 is modified to Phosphothreonine. Ser-385 is modified (phosphoserine). Disordered regions lie at residues 503–555 and 640–660; these read RLEN…DSQS and STNA…PEAE. A compositionally biased stretch (polar residues) spans 507-520; that stretch reads FPSSTEAGGSQSPK. Over residues 530 to 543 the composition is skewed to low complexity; that stretch reads THISSQNSSQSTHI. Polar residues-rich tracts occupy residues 544–555 and 640–650; these read TEQGSQGWDSQS and STNADSQSSSD. The residue at position 645 (Ser-645) is a Phosphoserine; by ATM.

This sequence belongs to the DNA repair metallo-beta-lactamase (DRMBL) family. As to quaternary structure, interacts with LIG4; the interaction is direct. Interacts with ATM. Interacts with BRCA1. Interacts with PRKDC. Interacts with TP53BP1. Also exhibits ATM- and phosphorylation-dependent interaction with the MRN complex, composed of MRE11, RAD50, and NBN. Phosphorylation on undefined residues by PRKDC may stimulate endonucleolytic activity on 5' and 3' hairpins and overhangs. PRKDC must remain present, even after phosphorylation, for efficient hairpin opening. Also phosphorylated by ATM in response to ionizing radiation (IR) and by ATR in response to ultraviolet (UV) radiation.

It localises to the nucleus. Required for V(D)J recombination, the process by which exons encoding the antigen-binding domains of immunoglobulins and T-cell receptor proteins are assembled from individual V, (D), and J gene segments. V(D)J recombination is initiated by the lymphoid specific RAG endonuclease complex, which generates site specific DNA double strand breaks (DSBs). These DSBs present two types of DNA end structures: hairpin sealed coding ends and phosphorylated blunt signal ends. These ends are independently repaired by the non homologous end joining (NHEJ) pathway to form coding and signal joints respectively. This protein exhibits single-strand specific 5'-3' exonuclease activity in isolation, and acquires endonucleolytic activity on 5' and 3' hairpins and overhangs when in a complex with PRKDC. The latter activity is required specifically for the resolution of closed hairpins prior to the formation of the coding joint. May also be required for the repair of complex DSBs induced by ionizing radiation, which require substantial end-processing prior to religation by NHEJ. This chain is Protein artemis (DCLRE1C), found in Pongo abelii (Sumatran orangutan).